The sequence spans 79 residues: Cytochrome b (79 aa).

The next 3 helical transmembrane spans lie at 1 to 7, 31 to 52, and 67 to 79; these read TALFLAM, WLIR…YLHI, and WNIG…LTMM. Residues His-37 and His-51 each coordinate heme b.

It belongs to the cytochrome b family. As to quaternary structure, the cytochrome bc1 complex contains 3 respiratory subunits (MT-CYB, CYC1 and UQCRFS1), 2 core proteins (UQCRC1 and UQCRC2) and probably 6 low-molecular weight proteins. Requires heme b as cofactor.

Its subcellular location is the mitochondrion inner membrane. In terms of biological role, component of the ubiquinol-cytochrome c reductase complex (complex III or cytochrome b-c1 complex) that is part of the mitochondrial respiratory chain. The b-c1 complex mediates electron transfer from ubiquinol to cytochrome c. Contributes to the generation of a proton gradient across the mitochondrial membrane that is then used for ATP synthesis. In Julidochromis regani (Convict julie), this protein is Cytochrome b (mt-cyb).